A 394-amino-acid chain; its full sequence is MAQNGYLVPADPSAVVTVKKKTPQASWALIDATGQSEPLDVDKYEIMHRVQIHARDLRILDPNLSYPSTILGRERAIVLNLEHIKAIITSEEVLLRDPSDENVIPVVEELRRRLPVGNASHNGGQGDGKEIAGAQNDGDTGDEDESPFEFRALEVALEAICSFLAARTAELETAAYPALDELTSKISSRNLDRVRKLKSAMTRLTARVQKVRDELEQLLDDDDDMADLYLSRKLSSASSPISSIGEPNWYTTSPTIGSKISRASRASLATVHGDENDVEELEMLLEAYFMQIDSTLNRLTTLREYIDDTEDYINIQLDNHRNQLIQLELVLSSGTVCLSMYSLVAGIFGMNIPYTWNDGHGYMFKYVVGLTGTLCVVVFVIIMSYARYKGLVGS.

Positions 115-145 (PVGNASHNGGQGDGKEIAGAQNDGDTGDEDE) are disordered. The next 2 helical transmembrane spans lie at 329–349 (LVLS…GIFG) and 366–386 (YVVG…MSYA). A Required for magnesium transport activity motif is present at residues 349 to 351 (GMN).

This sequence belongs to the CorA metal ion transporter (MIT) (TC 1.A.35.5) family. As to expression, expressed in the whole plant but preferentially in the mature anthers.

The protein localises to the membrane. Low-affinity magnesium transporter that mediates the influx of magnesium. Plays a crucial role in male gametophyte development and male fertility. This is Magnesium transporter MRS2-2 (MRS2-2) from Arabidopsis thaliana (Mouse-ear cress).